The chain runs to 525 residues: tRNA(Ile)-lysidine synthase (525 aa).

ATP is bound at residue 32–37; that stretch reads SGGRDS.

It belongs to the tRNA(Ile)-lysidine synthase family.

It localises to the cytoplasm. The enzyme catalyses cytidine(34) in tRNA(Ile2) + L-lysine + ATP = lysidine(34) in tRNA(Ile2) + AMP + diphosphate + H(+). Ligates lysine onto the cytidine present at position 34 of the AUA codon-specific tRNA(Ile) that contains the anticodon CAU, in an ATP-dependent manner. Cytidine is converted to lysidine, thus changing the amino acid specificity of the tRNA from methionine to isoleucine. The polypeptide is tRNA(Ile)-lysidine synthase (Psychrobacter sp. (strain PRwf-1)).